The chain runs to 189 residues: Hypoxanthine/guanine phosphoribosyltransferase (189 aa).

This sequence belongs to the purine/pyrimidine phosphoribosyltransferase family. Archaeal HPRT subfamily. In terms of assembly, homodimer.

The protein localises to the cytoplasm. It catalyses the reaction IMP + diphosphate = hypoxanthine + 5-phospho-alpha-D-ribose 1-diphosphate. The catalysed reaction is GMP + diphosphate = guanine + 5-phospho-alpha-D-ribose 1-diphosphate. It functions in the pathway purine metabolism; IMP biosynthesis via salvage pathway; IMP from hypoxanthine: step 1/1. Catalyzes a salvage reaction resulting in the formation of IMP that is energically less costly than de novo synthesis. The polypeptide is Hypoxanthine/guanine phosphoribosyltransferase (Methanothermus fervidus (strain ATCC 43054 / DSM 2088 / JCM 10308 / V24 S)).